Here is a 269-residue protein sequence, read N- to C-terminus: Putative carbamate hydrolase RutD (269 aa).

One can recognise an AB hydrolase-1 domain in the interval 26–144 (VVLLSSGLGG…CFDTRLHLLN (119 aa)).

The protein belongs to the AB hydrolase superfamily. Hydrolase RutD family.

The enzyme catalyses carbamate + 2 H(+) = NH4(+) + CO2. Its function is as follows. Involved in pyrimidine catabolism. May facilitate the hydrolysis of carbamate, a reaction that can also occur spontaneously. The sequence is that of Putative carbamate hydrolase RutD from Caulobacter vibrioides (strain ATCC 19089 / CIP 103742 / CB 15) (Caulobacter crescentus).